Here is a 2174-residue protein sequence, read N- to C-terminus: Spectinabilin polyketide synthase system protein NorB (2174 aa).

The Ketosynthase family 3 (KS3) domain occupies 34 to 459 (REPVAVVAMG…GTNAHVILEQ (426 aa)). Active-site for beta-ketoacyl synthase activity residues include cysteine 206, histidine 341, and histidine 381. Positions 567–888 (FLFSGQGSQR…AAVSRAFVQG (322 aa)) constitute a Malonyl-CoA:ACP transacylase (MAT) domain. Residues 938-1060 (HPLLGACLEL…GQLAPEAAAP (123 aa)) are N-terminal hotdog fold. The 275-residue stretch at 938–1212 (HPLLGACLEL…TRPITAGQLR (275 aa)) folds into the PKS/mFAS DH domain. The active-site Proton acceptor; for dehydratase activity is histidine 970. The tract at residues 1056 to 1075 (EAAAPPAAPGEDWPPPGAEP) is disordered. Residues 1061 to 1074 (PAAPGEDWPPPGAE) are compositionally biased toward pro residues. Residues 1073-1212 (AEPVPLEGFY…TRPITAGQLR (140 aa)) are C-terminal hotdog fold. The active-site Proton donor; for dehydratase activity is the aspartate 1134. One can recognise an Enoyl reductase (ER) domain in the interval 1424 to 1726 (GTVDDLVLAP…QARNVGKLVL (303 aa)). The Ketoreductase (KR) domain maps to 1736–1915 (GTILVTGGYG…ATALAWGMWA (180 aa)). The 76-residue stretch at 2017–2092 (PAVRELVRGQ…ALTDAIEARL (76 aa)) folds into the Carrier domain. Serine 2052 bears the O-(pantetheine 4'-phosphoryl)serine mark.

In terms of assembly, the spectinabilin polyketide synthase complex is composed of 4 proteins, NorA, NorA', NorB and NorC. The complex comprises 6 modules with a total of 28 catalytic domains catalyzing 7 chain elongations. NorA comprises one module, NorA' two modules, NorB one module and NorC two modules. It depends on pantetheine 4'-phosphate as a cofactor.

It carries out the reaction 4-nitrobenzoyl-CoA + 6 (S)-methylmalonyl-CoA + malonyl-CoA + 6 NADPH + 12 H(+) = demethyldeoxyspectinabilin + 7 CO2 + 6 NADP(+) + 8 CoA + 5 H2O. Its pathway is antibiotic biosynthesis. It participates in polyketide biosynthesis. Component of a type I modular polyketide synthase (PKS) that generates the backbone of the antibiotic spectinabilin (also known as neoaureothin), a nitroaryl-substituted polyketide metabolite. This PKS system accepts the unusual starter unit 4-nitrobenzoyl-CoA and extends it by 6 molecules of (S)-methylmalonyl-CoA and a single molecule of malonyl-CoA. The protein is Spectinabilin polyketide synthase system protein NorB of Streptomyces orinoci (Streptoverticillium orinoci).